We begin with the raw amino-acid sequence, 153 residues long: 6,7-dimethyl-8-ribityllumazine synthase (153 aa).

5-amino-6-(D-ribitylamino)uracil is bound by residues F22, 56-58 (AFE), and 80-82 (AVI). Position 85 to 86 (85 to 86 (AT)) interacts with (2S)-2-hydroxy-3-oxobutyl phosphate. H88 (proton donor) is an active-site residue. Position 113 (F113) interacts with 5-amino-6-(D-ribitylamino)uracil. (2S)-2-hydroxy-3-oxobutyl phosphate is bound at residue R127.

Belongs to the DMRL synthase family.

It carries out the reaction (2S)-2-hydroxy-3-oxobutyl phosphate + 5-amino-6-(D-ribitylamino)uracil = 6,7-dimethyl-8-(1-D-ribityl)lumazine + phosphate + 2 H2O + H(+). The protein operates within cofactor biosynthesis; riboflavin biosynthesis; riboflavin from 2-hydroxy-3-oxobutyl phosphate and 5-amino-6-(D-ribitylamino)uracil: step 1/2. In terms of biological role, catalyzes the formation of 6,7-dimethyl-8-ribityllumazine by condensation of 5-amino-6-(D-ribitylamino)uracil with 3,4-dihydroxy-2-butanone 4-phosphate. This is the penultimate step in the biosynthesis of riboflavin. The protein is 6,7-dimethyl-8-ribityllumazine synthase of Clostridium tetani (strain Massachusetts / E88).